Reading from the N-terminus, the 351-residue chain is Glycerol-3-phosphate dehydrogenase 1-like protein (351 aa).

G11–G16 is a binding site for NAD(+). Residue K121 participates in substrate binding. A154 is an NAD(+) binding site. The Proton acceptor role is filled by K205. NAD(+) contacts are provided by R271, K298, and Q300. R271–N272 is a binding site for substrate.

It belongs to the NAD-dependent glycerol-3-phosphate dehydrogenase family.

The protein localises to the cytoplasm. The enzyme catalyses sn-glycerol 3-phosphate + NAD(+) = dihydroxyacetone phosphate + NADH + H(+). Plays a role in regulating cardiac sodium current. The protein is Glycerol-3-phosphate dehydrogenase 1-like protein (gpd1l) of Danio rerio (Zebrafish).